Consider the following 374-residue polypeptide: Ribosomal RNA large subunit methyltransferase G (374 aa).

It belongs to the methyltransferase superfamily. RlmG family.

It is found in the cytoplasm. It carries out the reaction guanosine(1835) in 23S rRNA + S-adenosyl-L-methionine = N(2)-methylguanosine(1835) in 23S rRNA + S-adenosyl-L-homocysteine + H(+). Functionally, specifically methylates the guanine in position 1835 (m2G1835) of 23S rRNA. In Pseudomonas putida (strain GB-1), this protein is Ribosomal RNA large subunit methyltransferase G.